Here is a 540-residue protein sequence, read N- to C-terminus: MRTDDPVIGNDGDAPRYKNLMLKPGTQMRGMFEKIPFPLDFKLYLFHVTNPDVVMKGGKPRVREIGPYFFEEWKEKYDTVDNEEDDTLTFTLKNTWIFRPDLSKPLTGDEMITIPHPLILGALLMVQRDREAMMPLVSKGMDIIMNPLTTGFLTTRVMDLLFDGILIDCSSHEFSAKALCSGLESEGAVMPFNETHFKFSMFGLKNGTDAGRWVVYRGVKNIMDLGRVVSFNDETEMDIYDGDECNRYIGTDSTIFPPFLTTKDKLWAWSPEICRSIGAEYGGKSKYAGLPMSFFKLDFGDARNEPEHHCFCRDPPDICPPKGTIDLAPCLGAPIIGSKPHFYDSDPKLLAAVDGLTPNEKDHDVYIHFQLLSGTPVSAAKRLMFSMEIEPIRDHAVLGNLPTVILPLFWAEEGASLNKTWTNQLKYTLFLGLRFNTAVKWLTIIIGTIGTIVGGFMHYKRTTKMVNVTPVQSVNGSSAKGKGAGMTVVGHQPDSKGGSVTAPVIPSAKDLLQNSRNLPTVIEGLDKPQKVTVTEMQERY.

Residues 1 to 105 (MRTDDPVIGN…WIFRPDLSKP (105 aa)) lie on the Cytoplasmic side of the membrane. A helical transmembrane segment spans residues 106 to 126 (LTGDEMITIPHPLILGALLMV). Topologically, residues 127–436 (QRDREAMMPL…YTLFLGLRFN (310 aa)) are extracellular. Asparagine 193 and asparagine 206 each carry an N-linked (GlcNAc...) asparagine glycan. Cystine bridges form between cysteine 245-cysteine 310, cysteine 274-cysteine 330, and cysteine 312-cysteine 319. A glycan (N-linked (GlcNAc...) asparagine) is linked at asparagine 418. A helical membrane pass occupies residues 437 to 457 (TAVKWLTIIIGTIGTIVGGFM). At 458–540 (HYKRTTKMVN…VTVTEMQERY (83 aa)) the chain is on the cytoplasmic side.

Belongs to the CD36 family.

Its subcellular location is the cell membrane. In terms of biological role, plays an olfactory role that is not restricted to pheromone sensitivity. The protein is Sensory neuron membrane protein 1 of Aedes aegypti (Yellowfever mosquito).